Reading from the N-terminus, the 87-residue chain is Costars family protein (87 aa).

The protein belongs to the costars family.

This is Costars family protein from Oryza sativa subsp. indica (Rice).